A 1073-amino-acid polypeptide reads, in one-letter code: Self-sufficient cytochrome P450 monooxygenase CYP505AG1 (1073 aa).

Position 409 (Cys409) interacts with heme. The region spanning 501 to 644 is the Flavodoxin-like domain; sequence VTILYGSNSG…DLENWEDEHL (144 aa). FMN is bound by residues 507 to 511 and 588 to 620; these read SNSGT and VFAC…HRVA. Residues 680-909 enclose the FAD-binding FR-type domain; sequence HNAVECIVSE…RPCKKQFHLP (230 aa).

It in the N-terminal section; belongs to the cytochrome P450 family. Requires FAD as cofactor. It depends on FMN as a cofactor. Heme serves as cofactor.

It catalyses the reaction 2 oxidized [cytochrome P450] + NADPH = 2 reduced [cytochrome P450] + NADP(+) + H(+). It carries out the reaction an organic molecule + reduced [NADPH--hemoprotein reductase] + O2 = an alcohol + oxidized [NADPH--hemoprotein reductase] + H2O + H(+). The catalysed reaction is dodecanoate + reduced [NADPH--hemoprotein reductase] + O2 = 10-hydroxydodecanoate + oxidized [NADPH--hemoprotein reductase] + H2O + H(+). The enzyme catalyses tetradecanoate + reduced [NADPH--hemoprotein reductase] + O2 = 12-hydroxytetradecanoate + oxidized [NADPH--hemoprotein reductase] + H2O + H(+). Self-sufficient cytochrome P450 monooxygenase that catalyzes the regioselective in-chain hydroxylation of alkanes, fatty alcohols, and fatty acids, giving sub-terminal hydroxylation by acting preferentially on the omega-2 position. Prefers fatty acids as substrates, since it hydroxylates the small amounts of dodecanoic acid formed in the presence of an excess of 1-dodecanol. This Oidiodendron maius (strain Zn) protein is Self-sufficient cytochrome P450 monooxygenase CYP505AG1.